An 884-amino-acid polypeptide reads, in one-letter code: Protein P (884 aa).

Residues 1-184 (MHPFSRLFRN…GKPYSWEHRQ (184 aa)) form a terminal protein domain (TP) region. A spacer region spans residues 185–387 (LVQHNGQQHK…YCIHHIVSSL (203 aa)). The segment at 299-345 (RNSGHTTWFSSASNSNKSRSREKAYSSNSTSKRYSPPLNYEKSDFSS) is disordered. The segment at 388–729 (DDWGPCTVTG…YEELWPVVRQ (342 aa)) is polymerase/reverse transcriptase domain (RT). The Reverse transcriptase domain occupies 398–639 (DVTIKSPRTP…NHLHFMGYVI (242 aa)). Residues aspartate 470, aspartate 590, and aspartate 591 each coordinate Mg(2+).

Belongs to the hepadnaviridae P protein family.

The catalysed reaction is DNA(n) + a 2'-deoxyribonucleoside 5'-triphosphate = DNA(n+1) + diphosphate. It carries out the reaction Endonucleolytic cleavage to 5'-phosphomonoester.. Activated by host HSP70 and HSP40 in vitro to be able to bind the epsilon loop of the pgRNA. Because deletion of the RNase H region renders the protein partly chaperone-independent, the chaperones may be needed indirectly to relieve occlusion of the RNA-binding site by this domain. Inhibited by several reverse-transcriptase inhibitors: Lamivudine, Adefovir and Entecavir. Multifunctional enzyme that converts the viral RNA genome into dsDNA in viral cytoplasmic capsids. This enzyme displays a DNA polymerase activity that can copy either DNA or RNA templates, and a ribonuclease H (RNase H) activity that cleaves the RNA strand of RNA-DNA heteroduplexes in a partially processive 3'- to 5'-endonucleasic mode. Neo-synthesized pregenomic RNA (pgRNA) are encapsidated together with the P protein, and reverse-transcribed inside the nucleocapsid. Initiation of reverse-transcription occurs first by binding the epsilon loop on the pgRNA genome, and is initiated by protein priming, thereby the 5'-end of (-)DNA is covalently linked to P protein. Partial (+)DNA is synthesized from the (-)DNA template and generates the relaxed circular DNA (RC-DNA) genome. After budding and infection, the RC-DNA migrates in the nucleus, and is converted into a plasmid-like covalently closed circular DNA (cccDNA). The activity of P protein does not seem to be necessary for cccDNA generation, and is presumably released from (+)DNA by host nuclear DNA repair machinery. This Marmota monax (Woodchuck) protein is Protein P.